We begin with the raw amino-acid sequence, 858 residues long: Phospholipase D gamma 1 (858 aa).

The C2 domain maps to P27–F163. D225 lines the Ca(2+) pocket. The PLD phosphodiesterase 1 domain occupies T364–R399. Residues H369, K371, and D376 contribute to the active site. Residue H369 coordinates a 1,2-diacyl-sn-glycero-3-phosphate. Ca(2+) is bound by residues H405 and H437. A 1,2-diacyl-sn-glycero-3-phosphate is bound at residue Q565. Residue S680 is modified to Phosphoserine. The region spanning F704–S731 is the PLD phosphodiesterase 2 domain. Residues H709, K711, and D716 contribute to the active site. Residue H709 coordinates a 1,2-diacyl-sn-glycero-3-phosphate. Ca(2+) is bound at residue E772.

Belongs to the phospholipase D family. C2-PLD subfamily. Requires Ca(2+) as cofactor. In terms of tissue distribution, highly expressed in roots and flowers, moderately in stems, leaves and seedlings and low in siliques. Not detected in seeds.

It is found in the cytoplasm. The protein localises to the membrane. The enzyme catalyses a 1,2-diacyl-sn-glycero-3-phosphocholine + H2O = a 1,2-diacyl-sn-glycero-3-phosphate + choline + H(+). With respect to regulation, inhibited by neomycin. Up-regulated by PIP2 binding. In terms of biological role, hydrolyzes glycerol-phospholipids at the terminal phosphodiesteric bond to generate phosphatidic acids (PA). Plays an important role in various cellular processes, including phytohormone action, vesicular trafficking, secretion, cytoskeletal arrangement, meiosis, tumor promotion, pathogenesis, membrane deterioration and senescence. Can use phosphatidylserine (PS) and phosphatidylethanolamine (PE) as substrates only in the presence of PIP2. Can use phosphatidylcholine (PC), phosphatidylglycerol (PG) or N-acylphosphatidylethanolamine (NAPE) as substrates in the presence of PE and PIP2. Involved in membrane lipid modulation under aluminum (Al) stress and negatively modulate plant tolerance to Al. This is Phospholipase D gamma 1 from Arabidopsis thaliana (Mouse-ear cress).